The primary structure comprises 62 residues: Large ribosomal subunit protein bL33 (62 aa).

The protein belongs to the bacterial ribosomal protein bL33 family.

This is Large ribosomal subunit protein bL33 from Cyanothece sp. (strain PCC 7425 / ATCC 29141).